The primary structure comprises 230 residues: Extracellular ribonuclease LE (230 aa).

Positions 1–25 (MASNSAFSLFLILLIITQCLSVLNA) are cleaved as a signal peptide. An RNA-binding site is contributed by glutamine 37. Cystine bridges form between cysteine 43-cysteine 49, cysteine 50-cysteine 106, cysteine 79-cysteine 125, cysteine 186-cysteine 221, and cysteine 202-cysteine 213. RNA is bound by residues histidine 64, phenylalanine 114, 117–118 (HE), and 121–122 (KH). Histidine 64 (proton donor) is an active-site residue. The active site involves glutamate 118. Catalysis depends on histidine 122, which acts as the Proton acceptor.

Belongs to the RNase T2 family.

Its subcellular location is the secreted. The protein resides in the extracellular space. The protein localises to the cell wall. It catalyses the reaction a ribonucleotidyl-ribonucleotide-RNA + H2O = a 3'-end 3'-phospho-ribonucleotide-RNA + a 5'-end dephospho-ribonucleoside-RNA + H(+). Functionally, probably involved in plant phosphate-starvation rescue system. The chain is Extracellular ribonuclease LE from Solanum lycopersicum (Tomato).